A 634-amino-acid chain; its full sequence is Polyadenylate-binding protein 1A (634 aa).

RRM domains are found at residues 11-89 (ASLY…WSQR), 99-175 (GNIF…RFKS), 191-268 (TNVY…RAQK), and 294-370 (VNLY…LAQR). The PABC domain maps to 541-618 (QEPLTASMLA…AVAVLQAHQA (78 aa)).

The protein belongs to the polyadenylate-binding protein type-1 family. In terms of assembly, interacts with ybx1; interaction recruits pabpc1a on C5-methylcytosine (m5C)-containing mRNAs, preventing their degradation.

Its subcellular location is the cytoplasm. Its function is as follows. Binds the poly(A) tail of mRNA. Prevents mRNA deadenylation and confers poly(A) stability. Binds to N6-methyladenosine (m6A)-containing mRNAs. Stimulates the translation of mRNAs to which it is bound, acting, at least in part, with dazl. Involved in the maternal-to-zygotic transition in early embryo via interaction with ybx1: interaction recruits pabpc1a on C5-methylcytosine (m5C)-containing maternal mRNAs, preventing their degradation. This is Polyadenylate-binding protein 1A from Danio rerio (Zebrafish).